The following is a 457-amino-acid chain: Asparagine--tRNA ligase (457 aa).

This sequence belongs to the class-II aminoacyl-tRNA synthetase family. In terms of assembly, homodimer.

It is found in the cytoplasm. The catalysed reaction is tRNA(Asn) + L-asparagine + ATP = L-asparaginyl-tRNA(Asn) + AMP + diphosphate + H(+). This is Asparagine--tRNA ligase from Phytoplasma australiense.